The sequence spans 297 residues: MSVTVRVPAKVNVQLAVGGARPDGFHDLANVFLAVGLYDEVTATPADELRITCEGPDAAQVPLDRTNLAARAAIALAARHGLAPDVHLHIAKDIPVAGGMAGGSADAAGALLACDTLWGTNASRGELLDICAELGSDVPFSLVGGAALGTGRGERLRELEVGGTFHWVFAVADGGLSTPAVYGEFDRLSEGVRVPEPVASQELLDALAKGDAVALAAAVSNDLQPAALSLFPSLSDTLEAGRAAGALAALVSGSGPTTAFLTRDADGADAVAQALLASGTCRTARVAPSPAPGATVL.

Residue K10 is part of the active site. 95 to 105 contacts ATP; that stretch reads PVAGGMAGGSA. Residue D137 is part of the active site.

Belongs to the GHMP kinase family. IspE subfamily.

The catalysed reaction is 4-CDP-2-C-methyl-D-erythritol + ATP = 4-CDP-2-C-methyl-D-erythritol 2-phosphate + ADP + H(+). The protein operates within isoprenoid biosynthesis; isopentenyl diphosphate biosynthesis via DXP pathway; isopentenyl diphosphate from 1-deoxy-D-xylulose 5-phosphate: step 3/6. Its function is as follows. Catalyzes the phosphorylation of the position 2 hydroxy group of 4-diphosphocytidyl-2C-methyl-D-erythritol. This chain is 4-diphosphocytidyl-2-C-methyl-D-erythritol kinase, found in Streptomyces avermitilis (strain ATCC 31267 / DSM 46492 / JCM 5070 / NBRC 14893 / NCIMB 12804 / NRRL 8165 / MA-4680).